Reading from the N-terminus, the 156-residue chain is Ribosomal RNA large subunit methyltransferase H (156 aa).

S-adenosyl-L-methionine contacts are provided by residues Leu73, Gly104, and 123–128 (LSALTL).

It belongs to the RNA methyltransferase RlmH family. In terms of assembly, homodimer.

It localises to the cytoplasm. It catalyses the reaction pseudouridine(1915) in 23S rRNA + S-adenosyl-L-methionine = N(3)-methylpseudouridine(1915) in 23S rRNA + S-adenosyl-L-homocysteine + H(+). Specifically methylates the pseudouridine at position 1915 (m3Psi1915) in 23S rRNA. The chain is Ribosomal RNA large subunit methyltransferase H from Shewanella loihica (strain ATCC BAA-1088 / PV-4).